A 393-amino-acid polypeptide reads, in one-letter code: NAD(P)H-quinone oxidoreductase subunit H, chloroplastic (393 aa).

Belongs to the complex I 49 kDa subunit family. NDH is composed of at least 16 different subunits, 5 of which are encoded in the nucleus.

Its subcellular location is the plastid. It is found in the chloroplast thylakoid membrane. The catalysed reaction is a plastoquinone + NADH + (n+1) H(+)(in) = a plastoquinol + NAD(+) + n H(+)(out). It catalyses the reaction a plastoquinone + NADPH + (n+1) H(+)(in) = a plastoquinol + NADP(+) + n H(+)(out). Functionally, NDH shuttles electrons from NAD(P)H:plastoquinone, via FMN and iron-sulfur (Fe-S) centers, to quinones in the photosynthetic chain and possibly in a chloroplast respiratory chain. The immediate electron acceptor for the enzyme in this species is believed to be plastoquinone. Couples the redox reaction to proton translocation, and thus conserves the redox energy in a proton gradient. The polypeptide is NAD(P)H-quinone oxidoreductase subunit H, chloroplastic (Piper cenocladum (Ant piper)).